The chain runs to 81 residues: Large ribosomal subunit protein bL31B (81 aa).

This sequence belongs to the bacterial ribosomal protein bL31 family. Type B subfamily. In terms of assembly, part of the 50S ribosomal subunit.

The protein is Large ribosomal subunit protein bL31B of Lactobacillus acidophilus (strain ATCC 700396 / NCK56 / N2 / NCFM).